We begin with the raw amino-acid sequence, 101 residues long: NAD(P)H-quinone oxidoreductase subunit 4L, chloroplastic (101 aa).

Transmembrane regions (helical) follow at residues 2–22 (MLEH…YGLI), 32–52 (MCLE…SDLF), and 61–81 (IFSI…LAII).

It belongs to the complex I subunit 4L family. In terms of assembly, NDH is composed of at least 16 different subunits, 5 of which are encoded in the nucleus.

It is found in the plastid. The protein resides in the chloroplast thylakoid membrane. It catalyses the reaction a plastoquinone + NADH + (n+1) H(+)(in) = a plastoquinol + NAD(+) + n H(+)(out). It carries out the reaction a plastoquinone + NADPH + (n+1) H(+)(in) = a plastoquinol + NADP(+) + n H(+)(out). In terms of biological role, NDH shuttles electrons from NAD(P)H:plastoquinone, via FMN and iron-sulfur (Fe-S) centers, to quinones in the photosynthetic chain and possibly in a chloroplast respiratory chain. The immediate electron acceptor for the enzyme in this species is believed to be plastoquinone. Couples the redox reaction to proton translocation, and thus conserves the redox energy in a proton gradient. The sequence is that of NAD(P)H-quinone oxidoreductase subunit 4L, chloroplastic from Ranunculus macranthus (Large buttercup).